The sequence spans 427 residues: Imidazolonepropionase (427 aa).

Residues His-96 and His-98 each contribute to the Fe(3+) site. His-96 and His-98 together coordinate Zn(2+). Arg-105, Tyr-168, and His-201 together coordinate 4-imidazolone-5-propanoate. Tyr-168 lines the N-formimidoyl-L-glutamate pocket. His-265 is a binding site for Fe(3+). His-265 is a Zn(2+) binding site. Gln-268 is a binding site for 4-imidazolone-5-propanoate. Asp-340 is a binding site for Fe(3+). Asp-340 is a binding site for Zn(2+). Residues Asn-342 and Gly-344 each contribute to the N-formimidoyl-L-glutamate site. Thr-345 lines the 4-imidazolone-5-propanoate pocket.

The protein belongs to the metallo-dependent hydrolases superfamily. HutI family. The cofactor is Zn(2+). Fe(3+) serves as cofactor.

The protein localises to the cytoplasm. The catalysed reaction is 4-imidazolone-5-propanoate + H2O = N-formimidoyl-L-glutamate. The protein operates within amino-acid degradation; L-histidine degradation into L-glutamate; N-formimidoyl-L-glutamate from L-histidine: step 3/3. In terms of biological role, catalyzes the hydrolytic cleavage of the carbon-nitrogen bond in imidazolone-5-propanoate to yield N-formimidoyl-L-glutamate. It is the third step in the universal histidine degradation pathway. The chain is Imidazolonepropionase from Psychrobacter cryohalolentis (strain ATCC BAA-1226 / DSM 17306 / VKM B-2378 / K5).